Here is a 670-residue protein sequence, read N- to C-terminus: Solute carrier organic anion transporter family member 1A1 (670 aa).

Over 1–20 (MEETEKKVATQEGRFFSKMK) the chain is Cytoplasmic. A helical membrane pass occupies residues 21–40 (VFLMSLTCAYLAKSLSGVYM). At 41-59 (NSMLTQIERQFGIPTSVVG) the chain is on the extracellular side. A helical transmembrane segment spans residues 60-80 (FITGSFEIGNLLLIVFVSYFG). Topologically, residues 81 to 86 (RKLHRP) are cytoplasmic. A helical membrane pass occupies residues 87 to 111 (IIIGVGCVVMGLGCFLMASPHFLMG). The Extracellular portion of the chain corresponds to 112-155 (RYKYETTISPTSNLSSNSFLCIENRTQTLKPTQDPTECVKEIKS). Residues asparagine 124 and asparagine 135 are each glycosylated (N-linked (GlcNAc...) asparagine). The helical transmembrane segment at 156–184 (LMWIYVLIGNTMRGIGETPIMPLGISYIE) threads the bilayer. Residues 185-203 (DFAKSENSPLYIGILEMGK) lie on the Cytoplasmic side of the membrane. Residues 204–224 (IVGPIIGLLLGSFFARVYVDI) form a helical membrane-spanning segment. The Extracellular segment spans residues 225-242 (GSVNTDDLTITPTDTRWV). A helical membrane pass occupies residues 243 to 267 (GAWWIGFLVCAGVNILTSIPFFFFP). Topologically, residues 268-311 (KTLPKKELQDNVDVTKYEKVEKHRERAKKENLGITKDFLPFMKS) are cytoplasmic. The helical transmembrane segment at 312–333 (LCCNPIYMLFSLTSVLQINGFA) threads the bilayer. Over 334–353 (STFTFLPKYLEQQYGKSTSE) the chain is Extracellular. Residues 354–377 (AVFLIGVYSLPPVCLGYLISGFIM) form a helical membrane-spanning segment. The Cytoplasmic portion of the chain corresponds to 378–381 (KKFK). A helical membrane pass occupies residues 382–405 (ITVKKAAYIAFGLSLSEYFIFLCN). Residues 406 to 513 (YLLTCDNFPV…PECDNKLQYF (108 aa)) are Extracellular-facing. The Kazal-like domain maps to 433–488 (KNVLADCNTRCSCLTDTWDPVCGDNGLAYMSACLAGCEKSVGTGTNMVFQNCSCIG). Disulfide bonds link cysteine 439–cysteine 469, cysteine 445–cysteine 465, and cysteine 454–cysteine 486. 2 N-linked (GlcNAc...) asparagine glycosylation sites follow: asparagine 483 and asparagine 492. A helical membrane pass occupies residues 514-536 (LIKSVFSSFIFSLAAIPGYMVLL). At 537–545 (RCVKSEEKS) the chain is on the cytoplasmic side. The chain crosses the membrane as a helical span at residues 546 to 571 (IGVGLHAFFIRLLAGIPAPVYFGALI). Topologically, residues 572 to 605 (DRTCLHWGTLKCGQPGACRMYDINRFRHIYLGLP) are extracellular. Residues 606 to 623 (AAVRGSSFLPAVFILILM) form a helical membrane-spanning segment. The Cytoplasmic portion of the chain corresponds to 624–670 (RKFHFPGDIHSPDTELAEMKLTEKESECTDVCRSPKVENDGELKTKL). Serine 634 is subject to Phosphoserine.

Belongs to the organo anion transporter (TC 2.A.60) family. As to quaternary structure, binds to PDZK1. Interaction with PDZK1 is required for expression on hepatocyte surface. In terms of tissue distribution, highly expressed in liver, and at lower levels in kidney. Not detected in other tissues.

The protein resides in the basolateral cell membrane. It carries out the reaction estrone 3-sulfate(out) + hydrogencarbonate(in) = estrone 3-sulfate(in) + hydrogencarbonate(out). The catalysed reaction is taurocholate(out) + hydrogencarbonate(in) = taurocholate(in) + hydrogencarbonate(out). The enzyme catalyses L-thyroxine(out) = L-thyroxine(in). It catalyses the reaction prostaglandin E2(out) = prostaglandin E2(in). It carries out the reaction 17beta-estradiol 17-O-(beta-D-glucuronate)(out) = 17beta-estradiol 17-O-(beta-D-glucuronate)(in). The catalysed reaction is dehydroepiandrosterone 3-sulfate(out) = dehydroepiandrosterone 3-sulfate(in). Functionally, mediates the Na(+)-independent transport of organic anions such as steroid sulfate conjugates (dehydroepiandrosterone sulfate (DHEAS), 17-beta-glucuronosyl estradiol, estrone-3-sulfate), conjugated (taurocholate) and unconjugated (cholate) bile acids, prostaglandin E2 (PGE2) and L-thyroxine T4. Also capable of transporting sulfobromophthalein (BSP), ouabain and gadoxetate. Hydrogencarbonate/HCO3(-) acts as the probable counteranion that exchanges for organic anions. Shows a pH-sensitive substrate specificity which may be ascribed to the protonation state of the binding site and leads to a stimulation of substrate transport in an acidic microenvironment. The sequence is that of Solute carrier organic anion transporter family member 1A1 from Mus musculus (Mouse).